Here is a 396-residue protein sequence, read N- to C-terminus: Elongation factor Tu (396 aa).

The tr-type G domain maps to 10–206; the sequence is KPHVNIGTIG…AVDESVPEPV (197 aa). The G1 stretch occupies residues 19–26; it reads GHVDHGKT. Residue 19 to 26 coordinates GTP; sequence GHVDHGKT. Thr26 is a Mg(2+) binding site. A G2 region spans residues 62–66; it reads GITIN. The interval 83 to 86 is G3; the sequence is DAPG. GTP-binding positions include 83–87 and 138–141; these read DAPGH and NKSD. Positions 138–141 are G4; it reads NKSD. The segment at 176 to 178 is G5; the sequence is SGL.

It belongs to the TRAFAC class translation factor GTPase superfamily. Classic translation factor GTPase family. EF-Tu/EF-1A subfamily. In terms of assembly, monomer.

It localises to the cytoplasm. The enzyme catalyses GTP + H2O = GDP + phosphate + H(+). In terms of biological role, GTP hydrolase that promotes the GTP-dependent binding of aminoacyl-tRNA to the A-site of ribosomes during protein biosynthesis. The polypeptide is Elongation factor Tu (Beutenbergia cavernae (strain ATCC BAA-8 / DSM 12333 / CCUG 43141 / JCM 11478 / NBRC 16432 / NCIMB 13614 / HKI 0122)).